The chain runs to 205 residues: N-(5'-phosphoribosyl)anthranilate isomerase (205 aa).

This sequence belongs to the TrpF family.

It catalyses the reaction N-(5-phospho-beta-D-ribosyl)anthranilate = 1-(2-carboxyphenylamino)-1-deoxy-D-ribulose 5-phosphate. Its pathway is amino-acid biosynthesis; L-tryptophan biosynthesis; L-tryptophan from chorismate: step 3/5. The sequence is that of N-(5'-phosphoribosyl)anthranilate isomerase from Marinomonas sp. (strain MWYL1).